Consider the following 806-residue polypeptide: Transitional endoplasmic reticulum ATPase (806 aa).

Ala-2 is modified (N-acetylalanine). Residues Ser-3 and Ser-7 each carry the phosphoserine modification. Residue Lys-8 forms a Glycyl lysine isopeptide (Lys-Gly) (interchain with G-Cter in SUMO2) linkage. A Phosphoserine modification is found at Ser-13. Lys-18 is covalently cross-linked (Glycyl lysine isopeptide (Lys-Gly) (interchain with G-Cter in SUMO2)). At Ser-37 the chain carries Phosphoserine. 247-253 (PGTGKTL) is an ATP binding site. N6,N6,N6-trimethyllysine; by VCPKMT is present on Lys-315. The ATP site is built by Asn-348 and His-384. Phosphothreonine is present on Thr-436. Ser-462 is subject to Phosphoserine. An N6-acetyllysine mark is found at Lys-502 and Lys-505. Residue 521–526 (GCGKTL) participates in ATP binding. Lys-668 bears the N6-acetyllysine; alternate mark. Position 668 is an N6-succinyllysine; alternate (Lys-668). Position 702 is a phosphoserine (Ser-702). The interval 708–727 (RRERERQTNPSAMEVEEDDP) is disordered. Lys-754 is modified (N6-acetyllysine). A disordered region spans residues 768-806 (FGSFRFPSGNQGGAGPSQGSGGGTGGNVYTEDNDDDLYG). Residues Ser-770, Ser-775, and Ser-787 each carry the phosphoserine modification. Residues 777–793 (NQGGAGPSQGSGGGTGG) are compositionally biased toward gly residues. An interaction with UBXN6 region spans residues 797 to 806 (TEDNDDDLYG). A PIM motif motif is present at residues 802–806 (DDLYG). A Phosphotyrosine modification is found at Tyr-805.

Belongs to the AAA ATPase family. Homohexamer. Forms a ring-shaped particle of 12.5 nm diameter, that displays 6-fold radial symmetry. Part of a ternary complex containing STX5A, NSFL1C and VCP. NSFL1C forms a homotrimer that binds to one end of a VCP homohexamer. The complex binds to membranes enriched in phosphatidylethanolamine-containing lipids and promotes Golgi membrane fusion. Binds to a heterodimer of NPLOC4 and UFD1, binding to this heterodimer inhibits Golgi-membrane fusion. Interaction with VCIP135 leads to dissociation of the complex via ATP hydrolysis by VCP. Part of a ternary complex containing NPLOC4, UFD1 and VCP. Interacts with NSFL1C-like protein p37; the complex has membrane fusion activity and is required for Golgi and endoplasmic reticulum biogenesis. Interacts with SELENOS and SYVN1, as well as with DERL1 (via SHP-box motif), DERL2 and DERL3; which probably transfer misfolded proteins from the ER to VCP. Interacts with SVIP and DERL1. Component of a complex required to couple retrotranslocation, ubiquitination and deglycosylation composed of NGLY1, SAKS1, AMFR, VCP and RAD23B. Part of a complex composed of STUB1/CHIP, VCP/p97, CHRNA3, and UBXN2A that modulates the ubiquitination and endoplasmic reticulum-associated degradation (ERAD) of CHRNA3. Within the complex UBXN2A acts as a scaffold protein required for the interaction of CHRNA3 with VCP/p97, this interaction also inhibits CHRNA3 ubiquitination by STUB1/CHIP and subsequently ERAD. Interacts with UBXN2A (via UBX domain); the interaction is required for the interaction of CHRNA3 in the STUB1-VCP-UBXN2A complex. Directly interacts with UBXN4 and RNF19A. Interacts with CASR. Interacts with UBE4B and YOD1. Interacts with clathrin. Interacts with RNF103. Interacts with TRIM13 and TRIM21. Component of a VCP/p97-AMFR/gp78 complex that participates in the final step of the endoplasmic reticulum-associated degradation (ERAD) of HMGCR. Interacts directly with AMFR/gp78 (via its VIM). Interacts with RHBDD1 (via C-terminal domain). Interacts with SPRTN; leading to recruitment to stalled replication forks. Interacts with WASHC5. Interacts with UBOX5. Interacts (via N-terminus) with UBXN7, UBXN8, and probably several other UBX domain-containing proteins (via UBX domains); the interactions are mutually exclusive with VIM-dependent interactions such as those with AMFR and SELENOS. Forms a complex with UBQLN1 and UBXN4. Interacts (via the PIM motif) with RNF31 (via the PUB domain). Interacts with RIGI and RNF125; interaction takes place when RIGI is ubiquitinated via 'Lys-63'-linked ubiquitin on its CARD domains, leading to recruit RNF125 and promote ubiquitination and degradation of RIGI. Interacts with BAG6. Interacts with UBXN10. Interacts with UBXN6; the interaction with UBXN6 is direct and competitive with UFD1. Forms a ternary complex with CAV1 and UBXN6. Interacts with PLAA, UBXN6 and YOD1; may form a complex involved in macroautophagy. Interacts with ANKZF1. Interacts with ubiquitin-binding protein FAF1. Interacts with ZFAND2B (via VIM motif); the interaction is direct. Interacts with ZFAND1 (via its ubiquitin-like region); this interaction occurs in an arsenite-dependent manner. Interacts with CCDC47. Interacts with LMBR1L and UBAC2. Interacts with ATXN3. Interacts with TEX264; bridging VCP to covalent DNA-protein cross-links (DPCs). Post-translationally, ISGylated. In terms of processing, methylation at Lys-315 catalyzed by VCPKMT is increased in the presence of ASPSCR1. Lys-315 methylation may decrease ATPase activity. Phosphorylated by tyrosine kinases in response to T-cell antigen receptor activation. Phosphorylated in mitotic cells.

The protein resides in the cytoplasm. It is found in the cytosol. The protein localises to the endoplasmic reticulum. It localises to the nucleus. Its subcellular location is the stress granule. It catalyses the reaction ATP + H2O = ADP + phosphate + H(+). In terms of biological role, necessary for the fragmentation of Golgi stacks during mitosis and for their reassembly after mitosis. Involved in the formation of the transitional endoplasmic reticulum (tER). The transfer of membranes from the endoplasmic reticulum to the Golgi apparatus occurs via 50-70 nm transition vesicles which derive from part-rough, part-smooth transitional elements of the endoplasmic reticulum (tER). Vesicle budding from the tER is an ATP-dependent process. The ternary complex containing UFD1, VCP and NPLOC4 binds ubiquitinated proteins and is necessary for the export of misfolded proteins from the ER to the cytoplasm, where they are degraded by the proteasome. The NPLOC4-UFD1-VCP complex regulates spindle disassembly at the end of mitosis and is necessary for the formation of a closed nuclear envelope. Regulates E3 ubiquitin-protein ligase activity of RNF19A. Component of the VCP/p97-AMFR/gp78 complex that participates in the final step of the sterol-mediated ubiquitination and endoplasmic reticulum-associated degradation (ERAD) of HMGCR. Mediates the endoplasmic reticulum-associated degradation of CHRNA3 in cortical neurons as part of the STUB1-VCP-UBXN2A complex. Involved in endoplasmic reticulum stress-induced pre-emptive quality control, a mechanism that selectively attenuates the translocation of newly synthesized proteins into the endoplasmic reticulum and reroutes them to the cytosol for proteasomal degradation. Involved in clearance process by mediating G3BP1 extraction from stress granules. Also involved in DNA damage response: recruited to double-strand breaks (DSBs) sites in a RNF8- and RNF168-dependent manner and promotes the recruitment of TP53BP1 at DNA damage sites. Recruited to stalled replication forks by SPRTN: may act by mediating extraction of DNA polymerase eta (POLH) to prevent excessive translesion DNA synthesis and limit the incidence of mutations induced by DNA damage. Together with SPRTN metalloprotease, involved in the repair of covalent DNA-protein cross-links (DPCs) during DNA synthesis. Involved in interstrand cross-link repair in response to replication stress by mediating unloading of the ubiquitinated CMG helicase complex. Mediates extraction of PARP1 trapped to chromatin: recognizes and binds ubiquitinated PARP1 and promotes its removal. Required for cytoplasmic retrotranslocation of stressed/damaged mitochondrial outer-membrane proteins and their subsequent proteasomal degradation. Essential for the maturation of ubiquitin-containing autophagosomes and the clearance of ubiquitinated protein by autophagy. Acts as a negative regulator of type I interferon production by interacting with RIGI: interaction takes place when RIGI is ubiquitinated via 'Lys-63'-linked ubiquitin on its CARD domains, leading to recruit RNF125 and promote ubiquitination and degradation of RIGI. May play a role in the ubiquitin-dependent sorting of membrane proteins to lysosomes where they undergo degradation. May more particularly play a role in caveolins sorting in cells. By controlling the steady-state expression of the IGF1R receptor, indirectly regulates the insulin-like growth factor receptor signaling pathway. The chain is Transitional endoplasmic reticulum ATPase (VCP) from Bos taurus (Bovine).